A 274-amino-acid chain; its full sequence is Orotidine 5'-phosphate decarboxylase (274 aa).

The active-site Proton donor is the lysine 96.

The protein belongs to the OMP decarboxylase family. Type 2 subfamily.

The catalysed reaction is orotidine 5'-phosphate + H(+) = UMP + CO2. It functions in the pathway pyrimidine metabolism; UMP biosynthesis via de novo pathway; UMP from orotate: step 2/2. This chain is Orotidine 5'-phosphate decarboxylase, found in Bacteroides fragilis (strain ATCC 25285 / DSM 2151 / CCUG 4856 / JCM 11019 / LMG 10263 / NCTC 9343 / Onslow / VPI 2553 / EN-2).